A 100-amino-acid polypeptide reads, in one-letter code: Large ribosomal subunit protein bL21 (100 aa).

Belongs to the bacterial ribosomal protein bL21 family. As to quaternary structure, part of the 50S ribosomal subunit. Contacts protein L20.

Functionally, this protein binds to 23S rRNA in the presence of protein L20. In Mycoplasmoides gallisepticum (strain R(low / passage 15 / clone 2)) (Mycoplasma gallisepticum), this protein is Large ribosomal subunit protein bL21.